The chain runs to 480 residues: Ribosomal protein uS12 methylthiotransferase RimO (480 aa).

In terms of domain architecture, MTTase N-terminal spans 37–147 (NRIGFVSLGC…VLKHVHKYVP (111 aa)). [4Fe-4S] cluster-binding residues include Cys-46, Cys-82, Cys-111, Cys-179, Cys-183, and Cys-186. The Radical SAM core domain maps to 165–402 (LTPKHYAYLK…MEVQAEISAE (238 aa)). Residues 405-471 (ARFVGRTMDI…EHDLWAELVD (67 aa)) form the TRAM domain.

This sequence belongs to the methylthiotransferase family. RimO subfamily. The cofactor is [4Fe-4S] cluster.

The protein resides in the cytoplasm. It carries out the reaction L-aspartate(89)-[ribosomal protein uS12]-hydrogen + (sulfur carrier)-SH + AH2 + 2 S-adenosyl-L-methionine = 3-methylsulfanyl-L-aspartate(89)-[ribosomal protein uS12]-hydrogen + (sulfur carrier)-H + 5'-deoxyadenosine + L-methionine + A + S-adenosyl-L-homocysteine + 2 H(+). Catalyzes the methylthiolation of an aspartic acid residue of ribosomal protein uS12. This Shewanella sp. (strain ANA-3) protein is Ribosomal protein uS12 methylthiotransferase RimO.